The sequence spans 277 residues: Glucose-6-phosphatase catalytic subunit 1 (277 aa).

Arginine 4 provides a ligand contact to substrate. 2 helical membrane passes run 39-59 (GHAM…LSIA) and 67-87 (LLYR…ELVV). Catalysis depends on histidine 40, which acts as the Proton donor. Arginine 91 contributes to the substrate binding site. Residue histidine 97 is the Nucleophile of the active site. A run of 3 helical transmembrane segments spans residues 131-151 (FLIT…LKAL), 215-235 (IGCI…TFSP), and 250-270 (AVAL…IYPV). The short motif at 274 to 277 (GKNL) is the Prevents secretion from ER element.

This sequence belongs to the glucose-6-phosphatase family.

It localises to the endoplasmic reticulum membrane. It catalyses the reaction D-glucose 6-phosphate + H2O = D-glucose + phosphate. It participates in carbohydrate biosynthesis; gluconeogenesis. Functionally, hydrolyzes glucose-6-phosphate to glucose in the endoplasmic reticulum. Forms with the glucose-6-phosphate transporter (SLC37A4/G6PT) the complex responsible for glucose production in the terminal step of glycogenolysis and gluconeogenesis. Hence, it is the key enzyme in homeostatic regulation of blood glucose levels. This Haplochromis xenognathus (Lake Victoria cichlid) protein is Glucose-6-phosphatase catalytic subunit 1 (g6pc1).